A 1344-amino-acid chain; its full sequence is DEAD-box ATP-dependent RNA helicase FANCM (1344 aa).

Residues 39-61 (SSSHFTPLANPPITANLTKPPAK) are disordered. Residues 124 to 292 (ITKTALFSNT…GIIDNLQIST (169 aa)) form the Helicase ATP-binding domain. 137 to 144 (LPTGLGKT) is a binding site for ATP. A DEAH box motif is present at residues 240–243 (DEAH). The 172-residue stretch at 450 to 621 (KLSKMLEILV…SFNFHPSPRM (172 aa)) folds into the Helicase C-terminal domain. 4 disordered regions span residues 765–790 (VNTSQRKAKQVESPTSTLETTEKDYE), 1110–1148 (EVSSGAEMSADENEDVTGDSFEDSFIDDGTMPTANTQAE), 1183–1218 (YSAGPLTRINESRSDSDKSLSSLRTPKTTNSESNQD), and 1307–1344 (KQRSEAKEKEDATVIPNPGMQRSDGMEKDAPSFDLGLW). Acidic residues predominate over residues 1118 to 1135 (SADENEDVTGDSFEDSFI). Polar residues predominate over residues 1207–1218 (TPKTTNSESNQD). The span at 1308-1318 (QRSEAKEKEDA) shows a compositional bias: basic and acidic residues.

It belongs to the DEAD box helicase family. DEAH subfamily. FANCM sub-subfamily.

The protein localises to the nucleus. The catalysed reaction is ATP + H2O = ADP + phosphate + H(+). Involved in ordered homologous recombination (HR) events in somatic and meiotic cells. Involved in the suppression of spontaneous HR events in somatic cells. Has an opposite function to the DNA binding cofactor MHF1 which promotes spontaneous HR. Functions in replicative repair independently of MHF1 and in a parallel pathway to the endonuclease MUS81. Acts in the same pathway as the two DNA-binding cofactors MHF1 and MHF2 to restrain class II meiotic crossover (CO), and acts exclusively with MHF1 and MHF2 during meiosis to repair DNA interstrand cross-links (ICLs). This common pathway is in parallel to the pathway that involves the RECQ4A helicase. Seems to be involved in the stabilization of recombination intermediates. Involved in DNA double-strand break (DSB) repair during meiosis. Required for synthesis-dependent strand annealing (SDSA) and to a lesser extent for single-strand annealing (SSA). May process meiotic DSB repair intermediates, possibly D-loops, driving them toward noncrossover (NCO) resolution. The polypeptide is DEAD-box ATP-dependent RNA helicase FANCM (Arabidopsis thaliana (Mouse-ear cress)).